A 1178-amino-acid chain; its full sequence is Integrin alpha-2 (1178 aa).

A signal peptide spans 1–26; that stretch reads MGPGQAGGALLLRLLMLVQGILNCLA. At 27 to 1129 the chain is on the extracellular side; sequence YNVGLPGAKI…KPTEKAEVPT (1103 aa). 2 FG-GAP repeats span residues 31 to 89 and 98 to 158; these read LPGA…TATC and ASIS…FLTS. Cys-80 and Cys-89 are oxidised to a cystine. Asn-102 and Asn-109 each carry an N-linked (GlcNAc...) asparagine glycan. The VWFA domain occupies 185–362; the sequence is WEAVKNFLVK…TLGEQIFSIE (178 aa). 5 FG-GAP repeats span residues 363–417, 420–472, 474–536, 537–595, and 601–661; these read GTVQ…VIFP, AFDQ…KQGN, TVIQ…ILNQ, HQFL…TIRT, and ILGS…FTPD. 3 N-linked (GlcNAc...) asparagine glycosylation sites follow: Asn-429, Asn-457, and Asn-472. The short motif at 480–482 is the Cell attachment site element; it reads RGD. Asp-496, Asp-498, Asp-500, Asp-504, Asp-560, Asn-562, Asp-564, Asp-568, Asp-624, Asn-626, Asp-628, and Asp-632 together coordinate Ca(2+). Disulfide bonds link Cys-677–Cys-734, Cys-786–Cys-792, Cys-862–Cys-873, Cys-1016–Cys-1047, and Cys-1052–Cys-1057. Asn-696 carries an N-linked (GlcNAc...) asparagine glycan. N-linked (GlcNAc...) asparagine glycans are attached at residues Asn-1054, Asn-1071, and Asn-1078. A helical transmembrane segment spans residues 1130–1151; the sequence is GVIIGSIIAGILLLLAMTAGLW. Topologically, residues 1152–1178 are cytoplasmic; the sequence is KLGFFKRQYKKMGQNPDEMDETTELNS. The GFFKR motif motif lies at 1154 to 1158; the sequence is GFFKR.

Belongs to the integrin alpha chain family. Heterodimer of an alpha and a beta subunit. Alpha-2 associates with beta-1. Interacts with HPS5 and RAB21.

It is found in the membrane. Integrin alpha-2/beta-1 is a collagen receptor, being responsible for adhesion of platelets and other cells to collagens, modulation of collagen and collagenase gene expression, force generation and organization of newly synthesized extracellular matrix. It is also a receptor for laminins, collagen C-propeptides and E-cadherin. Mice homozygous for a null mutation in the alpha-2 die very early in embryogenesis. The chain is Integrin alpha-2 (Itga2) from Mus musculus (Mouse).